We begin with the raw amino-acid sequence, 548 residues long: Inosine-5'-monophosphate dehydrogenase (548 aa).

CBS domains lie at 121–201 (FILD…EDPV) and 205–261 (MSTE…PLAS). NAD(+) is bound by residues 298–300 (DSS) and 348–350 (GMG). 2 residues coordinate K(+): Gly-350 and Gly-352. Ser-353 lines the IMP pocket. Cys-355 is a K(+) binding site. Residue Cys-355 is the Thioimidate intermediate of the active site. Residues 388-390 (DGG) and 411-412 (GS) each bind IMP. Catalysis depends on Arg-461, which acts as the Proton acceptor. Gln-473 provides a ligand contact to IMP. The disordered stretch occupies residues 527–548 (ASAQTEGNVHGLHSHEKKLYSS). Ser-528 contacts K(+). The span at 539-548 (HSHEKKLYSS) shows a compositional bias: basic and acidic residues.

The protein belongs to the IMPDH/GMPR family. As to quaternary structure, homotetramer. K(+) serves as cofactor.

The protein resides in the cytoplasm. It catalyses the reaction IMP + NAD(+) + H2O = XMP + NADH + H(+). It functions in the pathway purine metabolism; XMP biosynthesis via de novo pathway; XMP from IMP: step 1/1. Its activity is regulated as follows. Mycophenolic acid (MPA) is a non-competitive inhibitor that prevents formation of the closed enzyme conformation by binding to the same site as the amobile flap. In contrast, mizoribine monophosphate (MZP) is a competitive inhibitor that induces the closed conformation. MPA is a potent inhibitor of mammalian IMPDHs but a poor inhibitor of the bacterial enzymes. MZP is a more potent inhibitor of bacterial IMPDH. In terms of biological role, catalyzes the conversion of inosine 5'-phosphate (IMP) to xanthosine 5'-phosphate (XMP), the first committed and rate-limiting step in the de novo synthesis of guanine nucleotides, and therefore plays an important role in the regulation of cell growth. Part of the gene cluster that mediates the biosynthesis of mycophenolic acid (MPA), the first isolated antibiotic natural product in the world. Does not play a role in the biosynthesis of MPA, but is involved in self resistance to MPA, since MPA acts as an inhibitor of IMP dehydrogenases. The sequence is that of Inosine-5'-monophosphate dehydrogenase from Penicillium brevicompactum.